Reading from the N-terminus, the 204-residue chain is Holliday junction branch migration complex subunit RuvA (204 aa).

Positions 1–64 are domain I; the sequence is MIGRLRGTLI…EDAQLLYGFN (64 aa). A domain II region spans residues 65–143; sequence TVSERALFRE…GWGAGDLFTP (79 aa). Residues 144-155 form a flexible linker region; that stretch reads ATDAAPVDSTPV. Residues 156 to 204 are domain III; that stretch reads IAQNAQEEAMSALLALGYKPPQASKAVSQVAKAGMSSEELIREALKSMV.

Belongs to the RuvA family. As to quaternary structure, homotetramer. Forms an RuvA(8)-RuvB(12)-Holliday junction (HJ) complex. HJ DNA is sandwiched between 2 RuvA tetramers; dsDNA enters through RuvA and exits via RuvB. An RuvB hexamer assembles on each DNA strand where it exits the tetramer. Each RuvB hexamer is contacted by two RuvA subunits (via domain III) on 2 adjacent RuvB subunits; this complex drives branch migration. In the full resolvosome a probable DNA-RuvA(4)-RuvB(12)-RuvC(2) complex forms which resolves the HJ.

It localises to the cytoplasm. Its function is as follows. The RuvA-RuvB-RuvC complex processes Holliday junction (HJ) DNA during genetic recombination and DNA repair, while the RuvA-RuvB complex plays an important role in the rescue of blocked DNA replication forks via replication fork reversal (RFR). RuvA specifically binds to HJ cruciform DNA, conferring on it an open structure. The RuvB hexamer acts as an ATP-dependent pump, pulling dsDNA into and through the RuvAB complex. HJ branch migration allows RuvC to scan DNA until it finds its consensus sequence, where it cleaves and resolves the cruciform DNA. This is Holliday junction branch migration complex subunit RuvA from Vibrio cholerae serotype O1 (strain ATCC 39541 / Classical Ogawa 395 / O395).